Here is a 136-residue protein sequence, read N- to C-terminus: Large-conductance mechanosensitive channel (136 aa).

The next 2 helical transmembrane spans lie at 10 to 30 and 76 to 96; these read FAMR…AAFG and GVFI…FMAI.

Belongs to the MscL family. Homopentamer.

The protein resides in the cell inner membrane. Channel that opens in response to stretch forces in the membrane lipid bilayer. May participate in the regulation of osmotic pressure changes within the cell. This Escherichia coli O139:H28 (strain E24377A / ETEC) protein is Large-conductance mechanosensitive channel.